The primary structure comprises 354 residues: Elongation factor Ts (354 aa).

Residues 81–84 (TDFV) are involved in Mg(2+) ion dislocation from EF-Tu.

The protein belongs to the EF-Ts family.

The protein resides in the cytoplasm. Its function is as follows. Associates with the EF-Tu.GDP complex and induces the exchange of GDP to GTP. It remains bound to the aminoacyl-tRNA.EF-Tu.GTP complex up to the GTP hydrolysis stage on the ribosome. The chain is Elongation factor Ts from Campylobacter concisus (strain 13826).